Consider the following 463-residue polypeptide: MTLAVNKKERAGVINPIFTCQPAGAEYATIGVKDCIPLVHGGQGCSMFVRLIFAQHLKENFDIASSSLHEASAVFGGMPRIEEGVKTLVARYPDLRLIPIITTCSTETIGDDVEGTINKVNKFLKKEYPNREVKLIPVHTPSYRGSQVTGYDAGVTSLITNLAKKGEPNGKLNIITGWVNPGDVTEVKHILSEMGVDANILLDTETFNAPTMPDKNSFTFGNTTIEDIAGSANAIGTIALCKYEGGNAAKFLQEQFDVPAIVGPTPIGIKNTDAWLQNIKKLTGKPIPESLVVERGKAIDSLADLAHMYFANKRVAIYGDPDLVIGLAEFCLEVELEPVLLLLGDDNQAASKDPRLAELAKRANHAEYDIDVIWNADLWELESRVKEKGDIDLILGHSKGRYIAIDNKIPMVRVGFPTFDRAGLWKNPVIGYRGAEWLGDAIANAMFADMEYKHDREWILNVW.

[8Fe-7S] cluster contacts are provided by Cys20, Cys45, Cys104, and Ser142.

Belongs to the NifD/NifK/NifE/NifN family. Hexamer of two alpha, two beta, and two delta chains. It depends on [8Fe-7S] cluster as a cofactor.

It carries out the reaction N2 + 8 reduced [2Fe-2S]-[ferredoxin] + 16 ATP + 16 H2O = H2 + 8 oxidized [2Fe-2S]-[ferredoxin] + 2 NH4(+) + 16 ADP + 16 phosphate + 6 H(+). Its function is as follows. This vanadium-iron protein is part of the nitrogenase complex that catalyzes the key enzymatic reactions in nitrogen fixation. The protein is Nitrogenase vanadium-iron protein beta chain (vnfK) of Trichormus variabilis (strain ATCC 29413 / PCC 7937) (Anabaena variabilis).